The following is a 338-amino-acid chain: Glycerol-3-phosphate dehydrogenase [NAD(P)+] (338 aa).

The NADPH site is built by S12, W13, and K110. 3 residues coordinate sn-glycerol 3-phosphate: K110, G141, and S143. A145 lines the NADPH pocket. Positions 196, 249, 259, 260, and 261 each coordinate sn-glycerol 3-phosphate. K196 serves as the catalytic Proton acceptor. R260 contacts NADPH. The NADPH site is built by V284 and E286.

It belongs to the NAD-dependent glycerol-3-phosphate dehydrogenase family.

It is found in the cytoplasm. The catalysed reaction is sn-glycerol 3-phosphate + NAD(+) = dihydroxyacetone phosphate + NADH + H(+). It catalyses the reaction sn-glycerol 3-phosphate + NADP(+) = dihydroxyacetone phosphate + NADPH + H(+). The protein operates within membrane lipid metabolism; glycerophospholipid metabolism. Functionally, catalyzes the reduction of the glycolytic intermediate dihydroxyacetone phosphate (DHAP) to sn-glycerol 3-phosphate (G3P), the key precursor for phospholipid synthesis. This is Glycerol-3-phosphate dehydrogenase [NAD(P)+] from Pediococcus pentosaceus (strain ATCC 25745 / CCUG 21536 / LMG 10740 / 183-1w).